A 327-amino-acid chain; its full sequence is Toluene-4-monooxygenase system, hydroxylase component subunit beta (327 aa).

This sequence belongs to the TmoE/XamoE family. In terms of assembly, the alkene monooxygenase multicomponent enzyme system is composed of an electron transfer component and a monooxygenase component interacting with the effector protein TmoD. The electron transfer component is composed of a ferredoxin reductase (TmoF) and a ferredoxin (TmoC), and the monooxygenase component is formed by a heterohexamer (dimer of heterotrimers) of two alpha subunits (TmoA), two beta subunits (TmoE) and two gamma subunits (TmoB).

The enzyme catalyses toluene + NADH + O2 + H(+) = 4-methylphenol + NAD(+) + H2O. The protein operates within xenobiotic degradation; toluene degradation. Inhibited by Zn(2+) and Cu(2+). Component of the toluene-4-monooxygenase multicomponent enzyme system which catalyzes the O2- and NADH-dependent hydroxylation of toluene to form p-cresol. Also able to convert benzene to phenol, catechol, and 1,2,3-trihydroxybenzene by successive hydroxylations. The protein is Toluene-4-monooxygenase system, hydroxylase component subunit beta of Ectopseudomonas mendocina (Pseudomonas mendocina).